Reading from the N-terminus, the 175-residue chain is Protein SELF-PRUNING (175 aa).

This sequence belongs to the phosphatidylethanolamine-binding protein family.

It localises to the cytoplasm. In terms of biological role, not known. In plants homozygous for the recessive allele of the SP gene, sympodial segments develop progressively fewer nodes until the shoot is terminated by two consecutive. inflorescences. The sequence is that of Protein SELF-PRUNING (SP) from Solanum lycopersicum (Tomato).